Consider the following 424-residue polypeptide: MAKNIQAIRGMKDYLPGETAIWQRIEGTLKNVLGSYGYSEIRLPIVEQTPLFKRAIGEVTDVVEKEMYTFEDRNGDSLTLRPEGTAGCVRAGIEHGLLYNQEQRLWYIGPMFRHERPQKGRYRQFHQLGAEVFGLQGPDIDAELIMLTARWWRALGISEHVSLELNSIGSLEARANYRDALVAFLEQHQETLDEDCKRRMYTNPLRVLDSKNPDVQALLNDAPALGDYLDDDSREHFAGLCKLLDAAGIAYTVNQRLVRGLDYYNRTVFEWVTNSLGSQGTVCAGGRYDGLVEQLGGRATPAVGFAMGLERLVLLVQAVNPEFIASPVVDIYLVAAGAQTQSAAMTLAERLRDEMPGVKLMTNHGGGNFKKQFARADKWDARIALVLGESEVADGTVVVKDLRSGEQTAVAQDSVAAHLRTLLG.

Belongs to the class-II aminoacyl-tRNA synthetase family. In terms of assembly, homodimer.

Its subcellular location is the cytoplasm. The catalysed reaction is tRNA(His) + L-histidine + ATP = L-histidyl-tRNA(His) + AMP + diphosphate + H(+). This Salmonella gallinarum (strain 287/91 / NCTC 13346) protein is Histidine--tRNA ligase.